Consider the following 386-residue polypeptide: 2,3-diketo-5-methylthiopentyl-1-phosphate enolase (386 aa).

The active-site Proton acceptor is the Lys85. Residues Lys131, 157-160, His248, Gly316, and 338-339 contribute to the substrate site; these read KDDE and GT. Residues Lys157, Asp159, and Glu160 each contribute to the Mg(2+) site. Position 157 is an N6-carboxylysine (Lys157).

It belongs to the RuBisCO large chain family. Type IV subfamily. In terms of assembly, homodimer. Requires Mg(2+) as cofactor.

It carries out the reaction 5-methylsulfanyl-2,3-dioxopentyl phosphate = 2-hydroxy-5-methylsulfanyl-3-oxopent-1-enyl phosphate. Its pathway is amino-acid biosynthesis; L-methionine biosynthesis via salvage pathway; L-methionine from S-methyl-5-thio-alpha-D-ribose 1-phosphate: step 3/6. Its function is as follows. Catalyzes the enolization of 2,3-diketo-5-methylthiopentyl-1-phosphate (DK-MTP-1-P) into 2-hydroxy-3-keto-5-methylthiopentenyl-1-phosphate (HK-MTPenyl-1-P). The protein is 2,3-diketo-5-methylthiopentyl-1-phosphate enolase (mtnW) of Microcystis aeruginosa.